A 471-amino-acid polypeptide reads, in one-letter code: Ribosome biogenesis protein YTM1 (471 aa).

Residues 10-92 (VTARFTTRDE…ETRLEVEYTR (83 aa)) form a ubiquitin-like (UBL) domain region. 3 WD repeats span residues 119 to 158 (SRAG…LATS), 165 to 203 (GRIT…RTIT), and 210 to 249 (SHRW…NPVA). A disordered region spans residues 245–274 (ENPVAPSSLLPNSTAASNKRQKLSKPDRTV). Positions 253–262 (LLPNSTAASN) are enriched in polar residues. WD repeat units follow at residues 285–325 (GHSS…CVDT), 327–366 (TTGH…TQIS), 372–412 (GHKN…TGGQ), and 436–471 (GHGE…ALGS). Positions 412 to 440 (QVGEGQQGESVHTIHRQGQSGPGKGHGEG) are disordered.

This sequence belongs to the WD repeat WDR12/YTM1 family. In terms of assembly, component of the NOP7 complex, composed of ERB1, NOP7 and YTM1. The complex is held together by ERB1, which interacts with NOP7 via its N-terminal domain and with YTM1 via a high-affinity interaction between the seven-bladed beta-propeller domains of the 2 proteins. The NOP7 complex associates with the 66S pre-ribosome. Interacts (via UBL domain) with MDN1 (via VWFA/MIDAS domain).

It localises to the nucleus. The protein resides in the nucleolus. The protein localises to the nucleoplasm. Its function is as follows. Component of the NOP7 complex, which is required for maturation of the 25S and 5.8S ribosomal RNAs and formation of the 60S ribosome. This is Ribosome biogenesis protein YTM1 from Phaeosphaeria nodorum (strain SN15 / ATCC MYA-4574 / FGSC 10173) (Glume blotch fungus).